The sequence spans 690 residues: Xylosyl- and glucuronyltransferase LARGE2 (690 aa).

Topologically, residues 1 to 8 (MLPRGRPR) are cytoplasmic. The chain crosses the membrane as a helical; Signal-anchor for type II membrane protein span at residues 9 to 29 (AMGAAVLLLLLLLVVGFFLFG). The Lumenal segment spans residues 30 to 690 (RDPDYGLGTT…TALQQARSRA (661 aa)). N-linked (GlcNAc...) asparagine glycans are attached at residues Asn51 and Asn78. The xylosyltransferase activity stretch occupies residues 68 to 343 (LHVAIVCAGY…FLGYDGKLLR (276 aa)). Residues Asp172 and Asp174 each coordinate Mn(2+). Asn202 is a glycosylation site (N-linked (GlcNAc...) asparagine). A glucuronyltransferase activity region spans residues 344–686 (RELFGCPNQF…LKYLTALQQA (343 aa)). Residues Asp492 and Asp494 each contribute to the Mn(2+) site.

It in the C-terminal section; belongs to the glycosyltransferase 49 family. In the N-terminal section; belongs to the glycosyltransferase 8 family. This sequence belongs to the glycosyltransferase 8 family. In terms of assembly, interacts with B4GAT1. The cofactor is Mn(2+). In terms of tissue distribution, highly expressed in the testis and kidney, but weakly expressed in the heart and brain. Expressed during embryogenesis from 7 dpc.

It localises to the golgi apparatus membrane. It carries out the reaction 3-O-[beta-D-GlcA-(1-&gt;3)-beta-D-Xyl-(1-&gt;4)-Rib-ol-P-Rib-ol-P-3-beta-D-GalNAc-(1-&gt;3)-beta-D-GlcNAc-(1-&gt;4)-(O-6-P-alpha-D-Man)]-Thr-[protein] + UDP-alpha-D-xylose = 3-O-[alpha-D-Xyl-(1-&gt;3)-beta-D-GlcA-(1-&gt;4)-beta-D-Xyl-(1-&gt;4)-Rib-ol-P-Rib-ol-P-3-beta-D-GalNAc-(1-&gt;3)-beta-D-GlcNAc-(1-&gt;4)-(O-6-P-alpha-D-Man)]-Thr-[protein] + UDP + H(+). The catalysed reaction is 3-O-{(1-&gt;[3)-alpha-D-Xyl-(1-&gt;3)-beta-D-GlcA-(1-&gt;](n)-4)-beta-D-Xyl-(1-&gt;4)-Rib-ol-P-Rib-ol-P-3-beta-D-GalNAc-(1-&gt;3)-beta-D-GlcNAc-(1-&gt;4)-O-6-P-alpha-D-Man}-L-Thr-[protein] + UDP-alpha-D-glucuronate = 3-O-{beta-D-GlcA-(1-&gt;[3)-alpha-D-Xyl-(1-&gt;3)-beta-D-GlcA-(1-&gt;](n)-4)-beta-D-Xyl-(1-&gt;4)-Rib-ol-P-Rib-ol-P-3-beta-D-GalNAc-(1-&gt;3)-beta-D-GlcNAc-(1-&gt;4)-O-6-P-alpha-D-Man}-L-Thr-[protein] + UDP + H(+). It catalyses the reaction 3-O-{beta-D-GlcA-(1-&gt;[3)-alpha-D-Xyl-(1-&gt;3)-beta-D-GlcA-(1-&gt;](n)-4)-beta-D-Xyl-(1-&gt;4)-Rib-ol-P-Rib-ol-P-3-beta-D-GalNAc-(1-&gt;3)-beta-D-GlcNAc-(1-&gt;4)-O-6-P-alpha-D-Man}-L-Thr-[protein] + UDP-alpha-D-xylose = 3-O-{(1-&gt;[3)-alpha-D-Xyl-(1-&gt;3)-beta-D-GlcA-(1-&gt;](n+1)-4)-beta-D-Xyl-(1-&gt;4)-Rib-ol-P-Rib-ol-P-3-beta-D-GalNAc-(1-&gt;3)-beta-D-GlcNAc-(1-&gt;4)-O-6-P-alpha-D-Man}-L-Thr-[protein] + UDP + H(+). It participates in protein modification; protein glycosylation. Bifunctional glycosyltransferase with both alpha-1,3-xylosyltransferase and beta-1,3-glucuronyltransferase activities involved in the maturation of alpha-dystroglycan (DAG1) by glycosylation leading to DAG1 binding to laminin G-like domain-containing extracellular proteins with high affinity and in a phosphorylated-O-mannosyl trisaccharide dependent manner. Elongates the glucuronyl-beta-1,4-xylose-beta disaccharide primer structure by adding repeating units [-3-Xylose-alpha-1,3-GlcA-beta-1-] to produce a heteropolysaccharide. Supports the maturation of DAG1 more effectively than LARGE1. In addition, can modify both heparan sulfate (HS)- and chondroitin/dermatan sulfate (CS/DS)-proteoglycans (PGs), namely GPC4, with a glycosaminoglycan (GAG)-like polysaccharide composed of xylose and glucuronic acid to confer laminin binding. This is Xylosyl- and glucuronyltransferase LARGE2 from Mus musculus (Mouse).